The following is an 886-amino-acid chain: Protein translocase subunit SecA (886 aa).

ATP-binding positions include glutamine 81, 99 to 103 (GEGKT), and aspartate 489.

This sequence belongs to the SecA family.

It localises to the plastid. It is found in the chloroplast stroma. Its subcellular location is the chloroplast thylakoid membrane. The enzyme catalyses ATP + H2O + cellular proteinSide 1 = ADP + phosphate + cellular proteinSide 2.. Functionally, has a central role in coupling the hydrolysis of ATP to the transfer of proteins across the thylakoid membrane. This Phaeodactylum tricornutum (strain CCAP 1055/1) protein is Protein translocase subunit SecA.